A 348-amino-acid chain; its full sequence is Dihydroorotase (348 aa).

Positions 14 and 16 each coordinate Zn(2+). Substrate is bound by residues 16-18 (HLR) and N42. Zn(2+) contacts are provided by K100, H137, and H175. K100 carries the post-translational modification N6-carboxylysine. H137 is a substrate binding site. Position 220 (L220) interacts with substrate. Residue D248 coordinates Zn(2+). Residue D248 is part of the active site. Substrate contacts are provided by H252 and A264.

The protein belongs to the metallo-dependent hydrolases superfamily. DHOase family. Class II DHOase subfamily. As to quaternary structure, homodimer. The cofactor is Zn(2+).

The enzyme catalyses (S)-dihydroorotate + H2O = N-carbamoyl-L-aspartate + H(+). Its pathway is pyrimidine metabolism; UMP biosynthesis via de novo pathway; (S)-dihydroorotate from bicarbonate: step 3/3. Catalyzes the reversible cyclization of carbamoyl aspartate to dihydroorotate. The protein is Dihydroorotase of Ectopseudomonas mendocina (strain ymp) (Pseudomonas mendocina).